Reading from the N-terminus, the 525-residue chain is Coronin-2A (525 aa).

WD repeat units lie at residues 24-71 (NCYD…TGKL), 72-122 (DPHY…RNLT), 123-170 (AYRK…SVIT), 171-214 (SPMS…AGTV), 215-259 (LQEA…DNLS), 260-305 (VPLM…ADKP), and 306-342 (HLSY…RFYK). Positions 485–524 (QMFYRQQEEIRRLRELLTQREVQAKQLELEIKNLRMGSEQ) form a coiled coil.

Belongs to the WD repeat coronin family. In terms of assembly, binds actin. Component of the N-Cor repressor complex, at least composed of NCOR1, NCOR2, HDAC3, TBL1X, TBL1R, CORO2A and GPS2.

In Homo sapiens (Human), this protein is Coronin-2A (CORO2A).